A 105-amino-acid polypeptide reads, in one-letter code: Met repressor (105 aa).

The protein belongs to the MetJ family. In terms of assembly, homodimer.

Its subcellular location is the cytoplasm. Its function is as follows. This regulatory protein, when combined with SAM (S-adenosylmethionine) represses the expression of the methionine regulon and of enzymes involved in SAM synthesis. This Pectobacterium carotovorum subsp. carotovorum (strain PC1) protein is Met repressor.